The primary structure comprises 437 residues: Phosphoglucosamine mutase (437 aa).

The Phosphoserine intermediate role is filled by Ser93. The Mg(2+) site is built by Ser93, Asp230, Asp232, and Asp234. Ser93 is modified (phosphoserine).

Belongs to the phosphohexose mutase family. Requires Mg(2+) as cofactor. In terms of processing, activated by phosphorylation.

It catalyses the reaction alpha-D-glucosamine 1-phosphate = D-glucosamine 6-phosphate. In terms of biological role, catalyzes the conversion of glucosamine-6-phosphate to glucosamine-1-phosphate. This chain is Phosphoglucosamine mutase, found in Clavibacter michiganensis subsp. michiganensis (strain NCPPB 382).